The following is a 510-amino-acid chain: MIWHIQNENFILDSTRIFMKAFHLLLFDGSFIFPECILIFGLILLLMIDSTSDQKDIPWLYFISSTSLVMSITALLFRWREEPMISFSGNFQTNNFNEIFQFLILLCSTLCIPLSVEYIECTEMAITEFLLFVLTATLGGMFLCGANDLITIFVAPECFSLCSYLLSGYTKKDVRSNEATTKYLLMGGASSSILVHGFSWLYGSSGGEIELQEIVNGLINTQMYNSPGISIALIFITVGIGFKLSPAPSHQWTPDVYEGSPTPVVAFLSVTSKVAASASATRIFDIPFYFSSNEWHLLLEILAILSMILGNLIAITQTSMKRMLAYSSIGQIGYVIIGIIVGDSNGGYASMITYMLFYISMNLGTFACIVSFGLRTGTDNIRDYAGLYTKDPFLALSLALCLLSLGGLPPLAGFFGKLHLFWCGWQAGLYFLVSIGLLTSVVSIYYYLKIIKLLMTGRNQEITPHVRNYIRSPLRSNNSIELSMIVCVIASTIPGISMNPIIAIAQDTLF.

13 consecutive transmembrane segments (helical) span residues 24 to 44 (LLLFDGSFIFPECILIFGLIL), 57 to 77 (IPWLYFISSTSLVMSITALLF), 99 to 119 (IFQFLILLCSTLCIPLSVEYI), 124 to 144 (MAITEFLLFVLTATLGGMFLC), 149 to 169 (LITIFVAPECFSLCSYLLSGY), 183 to 203 (YLLMGGASSSILVHGFSWLYG), 227 to 247 (PGISIALIFITVGIGFKLSPA), 295 to 315 (WHLLLEILAILSMILGNLIAI), 323 to 343 (MLAYSSIGQIGYVIIGIIVGD), 354 to 374 (YMLFYISMNLGTFACIVSFGL), 395 to 415 (ALSLALCLLSLGGLPPLAGFF), 418 to 438 (LHLFWCGWQAGLYFLVSIGLL), and 484 to 504 (MIVCVIASTIPGISMNPIIAI).

This sequence belongs to the complex I subunit 2 family. In terms of assembly, NDH is composed of at least 16 different subunits, 5 of which are encoded in the nucleus.

It localises to the plastid. The protein resides in the chloroplast thylakoid membrane. It catalyses the reaction a plastoquinone + NADH + (n+1) H(+)(in) = a plastoquinol + NAD(+) + n H(+)(out). The enzyme catalyses a plastoquinone + NADPH + (n+1) H(+)(in) = a plastoquinol + NADP(+) + n H(+)(out). Its function is as follows. NDH shuttles electrons from NAD(P)H:plastoquinone, via FMN and iron-sulfur (Fe-S) centers, to quinones in the photosynthetic chain and possibly in a chloroplast respiratory chain. The immediate electron acceptor for the enzyme in this species is believed to be plastoquinone. Couples the redox reaction to proton translocation, and thus conserves the redox energy in a proton gradient. The chain is NAD(P)H-quinone oxidoreductase subunit 2 A, chloroplastic from Vitis vinifera (Grape).